Here is a 149-residue protein sequence, read N- to C-terminus: Large ribosomal subunit protein uL15 (149 aa).

A compositionally biased stretch (basic residues) spans 1–29 (MVSHLKKTRKLRGHVSHGHGRVGKHRKGG). A disordered region spans residues 1–38 (MVSHLKKTRKLRGHVSHGHGRVGKHRKGGCRGGRGKAG).

The protein belongs to the universal ribosomal protein uL15 family.

In Tetrahymena thermophila, this protein is Large ribosomal subunit protein uL15 (RPL27A).